The primary structure comprises 601 residues: Elongation factor 4 (601 aa).

The tr-type G domain maps to 7 to 189 (KHTRNFSIVA…AIVEKVPVPD (183 aa)). GTP-binding positions include 19–24 (DHGKST) and 136–139 (NKID).

It belongs to the TRAFAC class translation factor GTPase superfamily. Classic translation factor GTPase family. LepA subfamily.

The protein resides in the cell membrane. It carries out the reaction GTP + H2O = GDP + phosphate + H(+). Functionally, required for accurate and efficient protein synthesis under certain stress conditions. May act as a fidelity factor of the translation reaction, by catalyzing a one-codon backward translocation of tRNAs on improperly translocated ribosomes. Back-translocation proceeds from a post-translocation (POST) complex to a pre-translocation (PRE) complex, thus giving elongation factor G a second chance to translocate the tRNAs correctly. Binds to ribosomes in a GTP-dependent manner. This is Elongation factor 4 from Clostridium novyi (strain NT).